Here is a 120-residue protein sequence, read N- to C-terminus: NAD(P)H-quinone oxidoreductase subunit 3, chloroplastic (120 aa).

The next 3 helical transmembrane spans lie at 2 to 22, 64 to 84, and 88 to 108; these read FLLY…VIPI, MFAL…PWAL, and ILGV…VLGL.

Belongs to the complex I subunit 3 family. In terms of assembly, NDH is composed of at least 16 different subunits, 5 of which are encoded in the nucleus.

It localises to the plastid. The protein resides in the chloroplast thylakoid membrane. It carries out the reaction a plastoquinone + NADH + (n+1) H(+)(in) = a plastoquinol + NAD(+) + n H(+)(out). The catalysed reaction is a plastoquinone + NADPH + (n+1) H(+)(in) = a plastoquinol + NADP(+) + n H(+)(out). NDH shuttles electrons from NAD(P)H:plastoquinone, via FMN and iron-sulfur (Fe-S) centers, to quinones in the photosynthetic chain and possibly in a chloroplast respiratory chain. The immediate electron acceptor for the enzyme in this species is believed to be plastoquinone. Couples the redox reaction to proton translocation, and thus conserves the redox energy in a proton gradient. This is NAD(P)H-quinone oxidoreductase subunit 3, chloroplastic from Oenothera biennis (German evening primrose).